The primary structure comprises 310 residues: 1-aminocyclopropane-1-carboxylate oxidase 1 (310 aa).

Residues 113–133 (EELSKTMDEYVCQLHKFAERL) adopt a coiled-coil conformation. The region spanning 158–259 (PAFGTKVAKY…RLSIATFYNP (102 aa)) is the Fe2OG dioxygenase domain. 3 residues coordinate Fe cation: histidine 182, aspartate 184, and histidine 240. Residue arginine 250 participates in 2-oxoglutarate binding.

It belongs to the iron/ascorbate-dependent oxidoreductase family. Fe(2+) serves as cofactor.

It carries out the reaction 1-aminocyclopropane-1-carboxylate + L-ascorbate + O2 = ethene + L-dehydroascorbate + hydrogen cyanide + CO2 + 2 H2O. The protein operates within alkene biosynthesis; ethylene biosynthesis via S-adenosyl-L-methionine; ethylene from S-adenosyl-L-methionine: step 2/2. Its function is as follows. Enzyme involved in the ethylene biosynthesis. May promote stem elongation by maximizing the extensibility cells, possibly by activating ethylene biosynthesis, in response to very-long-chain fatty acids (VLCFAs C20:0 to C30:0). The sequence is that of 1-aminocyclopropane-1-carboxylate oxidase 1 (ACO1) from Arabidopsis thaliana (Mouse-ear cress).